The following is a 329-amino-acid chain: 4-hydroxythreonine-4-phosphate dehydrogenase (329 aa).

Positions 136 and 137 each coordinate substrate. A divalent metal cation-binding residues include H166, H211, and H266. K274, N283, and R292 together coordinate substrate.

The protein belongs to the PdxA family. Homodimer. Zn(2+) is required as a cofactor. Mg(2+) serves as cofactor. The cofactor is Co(2+).

The protein resides in the cytoplasm. It catalyses the reaction 4-(phosphooxy)-L-threonine + NAD(+) = 3-amino-2-oxopropyl phosphate + CO2 + NADH. Its pathway is cofactor biosynthesis; pyridoxine 5'-phosphate biosynthesis; pyridoxine 5'-phosphate from D-erythrose 4-phosphate: step 4/5. Functionally, catalyzes the NAD(P)-dependent oxidation of 4-(phosphooxy)-L-threonine (HTP) into 2-amino-3-oxo-4-(phosphooxy)butyric acid which spontaneously decarboxylates to form 3-amino-2-oxopropyl phosphate (AHAP). This chain is 4-hydroxythreonine-4-phosphate dehydrogenase, found in Escherichia coli O139:H28 (strain E24377A / ETEC).